The following is a 153-amino-acid chain: ATP synthase subunit b' (153 aa).

Residues 23–40 form a helical membrane-spanning segment; sequence LMAIQVVALTYILNSLFF.

This sequence belongs to the ATPase B chain family. As to quaternary structure, F-type ATPases have 2 components, F(1) - the catalytic core - and F(0) - the membrane proton channel. F(1) has five subunits: alpha(3), beta(3), gamma(1), delta(1), epsilon(1). F(0) has four main subunits: a(1), b(1), b'(1) and c(10-14). The alpha and beta chains form an alternating ring which encloses part of the gamma chain. F(1) is attached to F(0) by a central stalk formed by the gamma and epsilon chains, while a peripheral stalk is formed by the delta, b and b' chains.

The protein localises to the cellular thylakoid membrane. F(1)F(0) ATP synthase produces ATP from ADP in the presence of a proton or sodium gradient. F-type ATPases consist of two structural domains, F(1) containing the extramembraneous catalytic core and F(0) containing the membrane proton channel, linked together by a central stalk and a peripheral stalk. During catalysis, ATP synthesis in the catalytic domain of F(1) is coupled via a rotary mechanism of the central stalk subunits to proton translocation. Its function is as follows. Component of the F(0) channel, it forms part of the peripheral stalk, linking F(1) to F(0). The b'-subunit is a diverged and duplicated form of b found in plants and photosynthetic bacteria. The protein is ATP synthase subunit b' of Prochlorococcus marinus (strain MIT 9215).